Here is a 157-residue protein sequence, read N- to C-terminus: 6,7-dimethyl-8-ribityllumazine synthase (157 aa).

5-amino-6-(D-ribitylamino)uracil contacts are provided by residues phenylalanine 24, 58–60 (SFE), and 82–84 (AVI). 87-88 (ET) is a binding site for (2S)-2-hydroxy-3-oxobutyl phosphate. The active-site Proton donor is histidine 90. Phenylalanine 115 is a binding site for 5-amino-6-(D-ribitylamino)uracil. Arginine 129 lines the (2S)-2-hydroxy-3-oxobutyl phosphate pocket.

Belongs to the DMRL synthase family.

It carries out the reaction (2S)-2-hydroxy-3-oxobutyl phosphate + 5-amino-6-(D-ribitylamino)uracil = 6,7-dimethyl-8-(1-D-ribityl)lumazine + phosphate + 2 H2O + H(+). It functions in the pathway cofactor biosynthesis; riboflavin biosynthesis; riboflavin from 2-hydroxy-3-oxobutyl phosphate and 5-amino-6-(D-ribitylamino)uracil: step 1/2. Its function is as follows. Catalyzes the formation of 6,7-dimethyl-8-ribityllumazine by condensation of 5-amino-6-(D-ribitylamino)uracil with 3,4-dihydroxy-2-butanone 4-phosphate. This is the penultimate step in the biosynthesis of riboflavin. The sequence is that of 6,7-dimethyl-8-ribityllumazine synthase from Thermus thermophilus (strain ATCC BAA-163 / DSM 7039 / HB27).